The sequence spans 310 residues: Putative S-adenosyl-L-methionine-dependent methyltransferase MUL_4763 (310 aa).

Residues aspartate 137 and 166–167 (DL) contribute to the S-adenosyl-L-methionine site.

The protein belongs to the UPF0677 family.

Exhibits S-adenosyl-L-methionine-dependent methyltransferase activity. The protein is Putative S-adenosyl-L-methionine-dependent methyltransferase MUL_4763 of Mycobacterium ulcerans (strain Agy99).